Consider the following 87-residue polypeptide: Long neurotoxin LlLong (87 aa).

An N-terminal signal peptide occupies residues 1–20 (KTLLLTLVVVTIICLDFGYT). Cystine bridges form between Cys23–Cys41, Cys34–Cys62, Cys47–Cys51, Cys66–Cys77, and Cys78–Cys83.

Belongs to the three-finger toxin family. Long-chain subfamily. Type II alpha-neurotoxin sub-subfamily. As to expression, expressed by the venom gland.

The protein resides in the secreted. In terms of biological role, binds with high affinity to muscular (alpha-1/CHRNA1) and neuronal (alpha-7/CHRNA7) nicotinic acetylcholine receptor (nAChR) and inhibits acetylcholine from binding to the receptor, thereby impairing neuromuscular and neuronal transmission. In Laticauda laticaudata (Blue-ringed sea krait), this protein is Long neurotoxin LlLong.